A 324-amino-acid chain; its full sequence is Porphobilinogen deaminase 1 (324 aa).

C249 carries the post-translational modification S-(dipyrrolylmethanemethyl)cysteine.

This sequence belongs to the HMBS family. Monomer. Requires dipyrromethane as cofactor.

It carries out the reaction 4 porphobilinogen + H2O = hydroxymethylbilane + 4 NH4(+). It participates in porphyrin-containing compound metabolism; protoporphyrin-IX biosynthesis; coproporphyrinogen-III from 5-aminolevulinate: step 2/4. Its function is as follows. Tetrapolymerization of the monopyrrole PBG into the hydroxymethylbilane pre-uroporphyrinogen in several discrete steps. The chain is Porphobilinogen deaminase 1 (hemC1) from Streptomyces avermitilis (strain ATCC 31267 / DSM 46492 / JCM 5070 / NBRC 14893 / NCIMB 12804 / NRRL 8165 / MA-4680).